A 555-amino-acid chain; its full sequence is Vetispiradiene synthase 1 (555 aa).

5 residues coordinate Mg(2+): D308, D312, D451, T455, and E459. The DDXXD motif signature appears at 308–312 (DDTFD).

It belongs to the terpene synthase family. Tpsa subfamily. Mg(2+) serves as cofactor.

The protein resides in the cytoplasm. The catalysed reaction is (2E,6E)-farnesyl diphosphate = (-)-vetispiradiene + diphosphate. It functions in the pathway secondary metabolite biosynthesis; terpenoid biosynthesis. In terms of biological role, sesquiterpene synthase that catalyzes the formation of vetispiradiene from trans,trans-farnesyl diphosphate. The initial internal cyclization produces the monocyclic intermediate germacrene A. The sequence is that of Vetispiradiene synthase 1 from Hyoscyamus muticus (Egyptian henbane).